The chain runs to 20 residues: Toxin TpF21-Cocle (20 aa).

The LCN-type CS-alpha/beta domain maps to 1-20; that stretch reads KDGYLVGNDGCKYSCNTYPK.

It belongs to the long (4 C-C) scorpion toxin superfamily. Sodium channel inhibitor family. Beta subfamily. In terms of tissue distribution, expressed by the venom gland.

Its subcellular location is the secreted. Its function is as follows. Beta toxins bind voltage-independently at site-4 of sodium channels (Nav) and shift the voltage of activation toward more negative potentials thereby affecting sodium channel activation and promoting spontaneous and repetitive firing. This Tityus pachyurus (Colombian scorpion) protein is Toxin TpF21-Cocle.